We begin with the raw amino-acid sequence, 77 residues long: Protein RADIALIS-like 4 (77 aa).

One can recognise an SANT domain in the interval 6–61 (MSTSSWTAREDKQFEMALAKFDKDTPDRWQKIARAVGGKSTEEVKRHYELLLRDVN).

In terms of tissue distribution, expressed just outside the vascular bundles in the rosette stem and the leaf traces. Not detected in floral primordia.

The protein resides in the nucleus. In terms of biological role, probable transcription factor. The chain is Protein RADIALIS-like 4 (RL4) from Arabidopsis thaliana (Mouse-ear cress).